Consider the following 334-residue polypeptide: 3-dehydroquinate synthase (334 aa).

Belongs to the archaeal-type DHQ synthase family.

It catalyses the reaction 2-amino-2,3,7-trideoxy-D-lyxo-hept-6-ulosonate + NAD(+) + H2O = 3-dehydroquinate + NH4(+) + NADH + H(+). Functionally, catalyzes the oxidative deamination and cyclization of 2-amino-3,7-dideoxy-D-threo-hept-6-ulosonic acid (ADH) to yield 3-dehydroquinate (DHQ), which is fed into the canonical shikimic pathway of aromatic amino acid biosynthesis. This Korarchaeum cryptofilum (strain OPF8) protein is 3-dehydroquinate synthase.